Reading from the N-terminus, the 310-residue chain is Methionyl-tRNA formyltransferase (310 aa).

A (6S)-5,6,7,8-tetrahydrofolate-binding site is contributed by 110–113 (SLLP).

It belongs to the Fmt family.

It carries out the reaction L-methionyl-tRNA(fMet) + (6R)-10-formyltetrahydrofolate = N-formyl-L-methionyl-tRNA(fMet) + (6S)-5,6,7,8-tetrahydrofolate + H(+). Attaches a formyl group to the free amino group of methionyl-tRNA(fMet). The formyl group appears to play a dual role in the initiator identity of N-formylmethionyl-tRNA by promoting its recognition by IF2 and preventing the misappropriation of this tRNA by the elongation apparatus. This Clostridium tetani (strain Massachusetts / E88) protein is Methionyl-tRNA formyltransferase.